A 289-amino-acid polypeptide reads, in one-letter code: Protease HtpX (289 aa).

Helical transmembrane passes span 6–26 (ILFLLTNLAITFVLGIVLNII) and 38–58 (TGILMMSLLFGFTGSLISLFM). His-144 provides a ligand contact to Zn(2+). Glu-145 is an active-site residue. A Zn(2+)-binding site is contributed by His-148. Transmembrane regions (helical) follow at residues 152 to 172 (GDMVTMTLLQGVLNTFVIFLS) and 194 to 214 (LVFWVVDIALQMIFGILATMI). A Zn(2+)-binding site is contributed by Glu-223.

It belongs to the peptidase M48B family. Zn(2+) serves as cofactor.

It is found in the cell inner membrane. The chain is Protease HtpX from Haemophilus ducreyi (strain 35000HP / ATCC 700724).